Consider the following 118-residue polypeptide: Large ribosomal subunit protein bL19 (118 aa).

The protein belongs to the bacterial ribosomal protein bL19 family.

This protein is located at the 30S-50S ribosomal subunit interface and may play a role in the structure and function of the aminoacyl-tRNA binding site. This is Large ribosomal subunit protein bL19 from Helicobacter pylori (strain G27).